We begin with the raw amino-acid sequence, 438 residues long: MPPKEDWEKYQKPVDTEEENDKNPPPLDEGDIELLKSYATGPYARELAAIKEDTEAVLKRINDTVGIKESDTGLAPISFWDVAADRQRMSEEQPLQVARCTKIIENEQSAEKNAYVINLKQIAKFVVSLGERVSPTDIEEGMRVGCDRNKYAIQLPLPPKIDPSVTMMQVEEKPDVTYGDVGGCKEQIERLREVVELPLLSPERFVKLGIDPPKGIMLYGPPGTGKTLCARAVANRTDATFIRVIGSELVQKYVGEGARMVRELFEMARTKKACIIFFDEIDAIGGARFDDGAGGDNEVQRTMLELITQLDGFDPRGNIKVLFATNRPNTLDEALMRPGRIDRKVEFGLPDLEGRAHILRIHAKSMAIDKDIRWELIARLCPSQTGAELRSVCTEAGMFAIRARRRVATEKDFLDAVQKVVKGNQKFSSTADYMNMSS.

The span at 1–15 (MPPKEDWEKYQKPVD) shows a compositional bias: basic and acidic residues. A disordered region spans residues 1–31 (MPPKEDWEKYQKPVDTEEENDKNPPPLDEGD). Ser-90 carries the post-translational modification Phosphoserine. Residue 220 to 227 (GPPGTGKT) participates in ATP binding.

This sequence belongs to the AAA ATPase family.

The protein localises to the cytoplasm. Its subcellular location is the nucleus. Its function is as follows. The 26S proteasome is involved in the ATP-dependent degradation of ubiquitinated proteins. The regulatory (or ATPase) complex confers ATP dependency and substrate specificity to the 26S complex. The polypeptide is 26S proteasome regulatory subunit 7 homolog (rpt1) (Schizosaccharomyces pombe (strain 972 / ATCC 24843) (Fission yeast)).